Here is a 334-residue protein sequence, read N- to C-terminus: Fructose-1,6-bisphosphatase class 1 (334 aa).

Glutamate 90, aspartate 113, leucine 115, and aspartate 116 together coordinate Mg(2+). Residues 116-119, asparagine 209, tyrosine 242, and lysine 272 contribute to the substrate site; that span reads DGSS. Glutamate 278 is a Mg(2+) binding site.

Belongs to the FBPase class 1 family. In terms of assembly, homotetramer. It depends on Mg(2+) as a cofactor.

It is found in the cytoplasm. The catalysed reaction is beta-D-fructose 1,6-bisphosphate + H2O = beta-D-fructose 6-phosphate + phosphate. Its pathway is carbohydrate biosynthesis; gluconeogenesis. In Actinobacillus pleuropneumoniae serotype 5b (strain L20), this protein is Fructose-1,6-bisphosphatase class 1.